Here is a 606-residue protein sequence, read N- to C-terminus: Replication protein E1 (606 aa).

The Nuclear localization signal motif lies at 78-80 (KRK). A phosphoserine; by host mark is found at Ser-83 and Ser-91. Positions 90–99 (LSPRLESISL) match the Nuclear export signal motif. Residues 146–309 (GSGDVDIHYT…TILGHKSAEA (164 aa)) are DNA-binding region. One can recognise an SF3 helicase domain in the interval 408 to 558 (INFIVFLTAL…FPMKADNTPQ (151 aa)). Residue 434–441 (GPPNSGKS) coordinates ATP. A Glycyl lysine isopeptide (Lys-Gly) (interchain with G-Cter in SUMO) cross-link involves residue Lys-515. The tract at residues 581–606 (DQEEEGEDGESQRAFQCSARSANEHL) is disordered. The span at 593–606 (RAFQCSARSANEHL) shows a compositional bias: polar residues.

Belongs to the papillomaviridae E1 protein family. In terms of assembly, can form hexamers. Interacts with E2 protein; this interaction increases E1 DNA binding specificity. Interacts with host DNA polymerase subunit POLA2. Interacts with host single stranded DNA-binding protein RPA1. Interacts with host TOP1; this interaction stimulates the enzymatic activity of TOP1. In terms of processing, phosphorylated. Sumoylated.

The protein resides in the host nucleus. It catalyses the reaction Couples ATP hydrolysis with the unwinding of duplex DNA by translocating in the 3'-5' direction.. The enzyme catalyses ATP + H2O = ADP + phosphate + H(+). In terms of biological role, ATP-dependent DNA 3'-5' helicase required for initiation of viral DNA replication. It forms a complex with the viral E2 protein. The E1-E2 complex binds to the replication origin which contains binding sites for both proteins. During the initial step, a dimer of E1 interacts with a dimer of protein E2 leading to a complex that binds the viral origin of replication with high specificity. Then, a second dimer of E1 displaces the E2 dimer in an ATP-dependent manner to form the E1 tetramer. Following this, two E1 monomers are added to each half of the site, which results in the formation of two E1 trimers on the viral ori. Subsequently, two hexamers will be created. The double hexamer acts as a bi-directional helicase machinery and unwinds the viral DNA and then recruits the host DNA polymerase to start replication. The protein is Replication protein E1 of Human papillomavirus 5.